We begin with the raw amino-acid sequence, 78 residues long: Large ribosomal subunit protein eL20 (78 aa).

This sequence belongs to the eukaryotic ribosomal protein eL20 family. Part of the 50S ribosomal subunit. Binds 23S rRNA.

This is Large ribosomal subunit protein eL20 from Thermococcus sibiricus (strain DSM 12597 / MM 739).